Here is a 436-residue protein sequence, read N- to C-terminus: Trigger factor (436 aa).

The PPIase FKBP-type domain maps to 163 to 248; that stretch reads GDRVTVDFEG…LKKIEAAHLP (86 aa).

It belongs to the FKBP-type PPIase family. Tig subfamily.

Its subcellular location is the cytoplasm. The enzyme catalyses [protein]-peptidylproline (omega=180) = [protein]-peptidylproline (omega=0). Functionally, involved in protein export. Acts as a chaperone by maintaining the newly synthesized protein in an open conformation. Functions as a peptidyl-prolyl cis-trans isomerase. The polypeptide is Trigger factor (Albidiferax ferrireducens (strain ATCC BAA-621 / DSM 15236 / T118) (Rhodoferax ferrireducens)).